Consider the following 307-residue polypeptide: Putative gluconeogenesis factor (307 aa).

This sequence belongs to the gluconeogenesis factor family.

It localises to the cytoplasm. Its function is as follows. Required for morphogenesis under gluconeogenic growth conditions. This Yersinia pestis protein is Putative gluconeogenesis factor.